Reading from the N-terminus, the 130-residue chain is Small ribosomal subunit protein uS9 (130 aa).

The interval 111 to 130 is disordered; sequence VERKKVGLHKARRATQFSKR. Residues 116–130 are compositionally biased toward basic residues; sequence VGLHKARRATQFSKR.

The protein belongs to the universal ribosomal protein uS9 family.

The polypeptide is Small ribosomal subunit protein uS9 (Xylella fastidiosa (strain M23)).